A 175-amino-acid chain; its full sequence is Avenin-like a7 (175 aa).

The N-terminal stretch at 1-19 (MKTMFILALLAFTATSAVA) is a signal peptide.

The protein belongs to the prolamin family. Post-translationally, contains 7 disulfide bonds.

In terms of biological role, seed storage protein. Not integrated in the gluten polymer through disulfide bonds, unless incorporated by reduction and reoxidation during dough making. Increases dough strength and bread volume, but decreases dough stability when added into a base wheat flour. This is Avenin-like a7 from Triticum aestivum (Wheat).